The sequence spans 645 residues: MESHYELAEARWFMSKIQDYFRGGKISAGITHKLLEKLDFPCHFAHVKRIFKENDRHNQGRITTEDFRTIYRCIVHREEIVEIFNTYTENRKILPEDSLIEFLTQEQYEMEMDESSSVEIIQKYEPIAEVKNERQMSIEGFARYMFSSECLLFKETCNTVYQDMNKPLNDYYISSSHNTYLISDQILGPSDIWGYISALVKGCRCLEIDCWDGAQNEPIVYHGYTLTSKLLFKTVIQAINKYAFVTSDYPVVLSLENHCSPGQQEVMTDILQSTFGDFLLSDILDEFPDSLPSPEALKFKILVKNKKVGTLSETRERLGTDKRGIALDLEEEIYENEDEDSGKEPETWDDFLSRVKEEQEADPSTLSGIADAKKKIRKLRVALALSDLVIYTKAEKFRNFQYSRVYQQFNETTSMGESRARKLSKLRAHEFIFHTAAFITRVYPKFTRADSSNFNPQEFWNVGCQMVALNFQTPGLPMDLQNGKFLDNGGSGYVLKPDFLRDTTLGFNPNEPEGDGHPVTLTIRLISGIQLPVNVPSNTSDIIVIIEVYGVPNDHMKQQSRAVKNNAFSPRWNETFTFLIQVPELALIRFVVETQGFLSGNELLGQYTLPVLCMNKGYRRVPLFSKSGANLEPSSLFIYVWYYRE.

The EF-hand domain occupies 42–77 (CHFAHVKRIFKENDRHNQGRITTEDFRTIYRCIVHR). The PI-PLC X-box domain maps to 162-306 (QDMNKPLNDY…LKFKILVKNK (145 aa)). Residues His-177 and His-222 contribute to the active site. Residues 385–501 (LSDLVIYTKA…GYVLKPDFLR (117 aa)) enclose the PI-PLC Y-box domain. The region spanning 501–625 (RDTTLGFNPN…KGYRRVPLFS (125 aa)) is the C2 domain.

In terms of assembly, interacts via its C2 domain with PtdIns(3)P and, to a lesser extent, PtdIns(5)P in vitro. Ca(2+) serves as cofactor.

The protein localises to the nucleus. The protein resides in the cytoplasm. It localises to the perinuclear region. The catalysed reaction is a 1,2-diacyl-sn-glycero-3-phospho-(1D-myo-inositol-4,5-bisphosphate) + H2O = 1D-myo-inositol 1,4,5-trisphosphate + a 1,2-diacyl-sn-glycerol + H(+). In terms of biological role, the production of the second messenger molecules diacylglycerol (DAG) and inositol 1,4,5-trisphosphate (IP3) is mediated by activated phosphatidylinositol-specific phospholipase C enzymes. In vitro, hydrolyzes PtdIns(4,5)P2 in a Ca(2+)-dependent manner. Triggers intracellular Ca(2+) oscillations in oocytes solely during M phase and is involved in inducing oocyte activation and initiating embryonic development up to the blastocyst stage. Is therefore a strong candidate for the egg-activating soluble sperm factor that is transferred from the sperm into the egg cytoplasm following gamete membrane fusion. May exert an inhibitory effect on phospholipase-C-coupled processes that depend on calcium ions and protein kinase C, including CFTR trafficking and function. This Rattus norvegicus (Rat) protein is 1-phosphatidylinositol 4,5-bisphosphate phosphodiesterase zeta-1.